The primary structure comprises 88 residues: Large ribosomal subunit protein eL37A (88 aa).

Zn(2+) contacts are provided by Cys19, Cys22, Cys34, and Cys37. Residues 19-37 form a C4-type zinc finger; it reads CNRCGRRSFHVQKKTCSSC.

This sequence belongs to the eukaryotic ribosomal protein eL37 family. Component of the large ribosomal subunit (LSU). Mature yeast ribosomes consist of a small (40S) and a large (60S) subunit. The 40S small subunit contains 1 molecule of ribosomal RNA (18S rRNA) and 33 different proteins (encoded by 57 genes). The large 60S subunit contains 3 rRNA molecules (25S, 5.8S and 5S rRNA) and 46 different proteins (encoded by 81 genes). Zn(2+) serves as cofactor.

It localises to the cytoplasm. Component of the ribosome, a large ribonucleoprotein complex responsible for the synthesis of proteins in the cell. The small ribosomal subunit (SSU) binds messenger RNAs (mRNAs) and translates the encoded message by selecting cognate aminoacyl-transfer RNA (tRNA) molecules. The large subunit (LSU) contains the ribosomal catalytic site termed the peptidyl transferase center (PTC), which catalyzes the formation of peptide bonds, thereby polymerizing the amino acids delivered by tRNAs into a polypeptide chain. The nascent polypeptides leave the ribosome through a tunnel in the LSU and interact with protein factors that function in enzymatic processing, targeting, and the membrane insertion of nascent chains at the exit of the ribosomal tunnel. This chain is Large ribosomal subunit protein eL37A, found in Saccharomyces cerevisiae (strain ATCC 204508 / S288c) (Baker's yeast).